The chain runs to 251 residues: Ubiquinone/menaquinone biosynthesis C-methyltransferase UbiE (251 aa).

S-adenosyl-L-methionine-binding positions include Thr74, Asp95, 123–124 (NA), and Ser140.

Belongs to the class I-like SAM-binding methyltransferase superfamily. MenG/UbiE family.

The enzyme catalyses a 2-demethylmenaquinol + S-adenosyl-L-methionine = a menaquinol + S-adenosyl-L-homocysteine + H(+). It catalyses the reaction a 2-methoxy-6-(all-trans-polyprenyl)benzene-1,4-diol + S-adenosyl-L-methionine = a 5-methoxy-2-methyl-3-(all-trans-polyprenyl)benzene-1,4-diol + S-adenosyl-L-homocysteine + H(+). It participates in quinol/quinone metabolism; menaquinone biosynthesis; menaquinol from 1,4-dihydroxy-2-naphthoate: step 2/2. Its pathway is cofactor biosynthesis; ubiquinone biosynthesis. In terms of biological role, methyltransferase required for the conversion of demethylmenaquinol (DMKH2) to menaquinol (MKH2) and the conversion of 2-polyprenyl-6-methoxy-1,4-benzoquinol (DDMQH2) to 2-polyprenyl-3-methyl-6-methoxy-1,4-benzoquinol (DMQH2). The sequence is that of Ubiquinone/menaquinone biosynthesis C-methyltransferase UbiE from Salmonella paratyphi A (strain AKU_12601).